A 175-amino-acid polypeptide reads, in one-letter code: ATP-dependent protease subunit HslV (175 aa).

T2 is a catalytic residue. 3 residues coordinate Na(+): G158, C161, and T164.

It belongs to the peptidase T1B family. HslV subfamily. A double ring-shaped homohexamer of HslV is capped on each side by a ring-shaped HslU homohexamer. The assembly of the HslU/HslV complex is dependent on binding of ATP.

It is found in the cytoplasm. It catalyses the reaction ATP-dependent cleavage of peptide bonds with broad specificity.. Its activity is regulated as follows. Allosterically activated by HslU binding. Protease subunit of a proteasome-like degradation complex believed to be a general protein degrading machinery. The chain is ATP-dependent protease subunit HslV from Haemophilus influenzae (strain PittGG).